Consider the following 555-residue polypeptide: Formate--tetrahydrofolate ligase (555 aa).

ATP is bound at residue 64–71 (TKAGIGKT).

This sequence belongs to the formate--tetrahydrofolate ligase family.

It catalyses the reaction (6S)-5,6,7,8-tetrahydrofolate + formate + ATP = (6R)-10-formyltetrahydrofolate + ADP + phosphate. It participates in one-carbon metabolism; tetrahydrofolate interconversion. The protein is Formate--tetrahydrofolate ligase of Phocaeicola vulgatus (strain ATCC 8482 / DSM 1447 / JCM 5826 / CCUG 4940 / NBRC 14291 / NCTC 11154) (Bacteroides vulgatus).